The chain runs to 394 residues: Dihydroorotase (394 aa).

Positions 15, 17, 98, 135, 175, and 245 each coordinate Zn(2+). N6-carboxylysine is present on Lys98.

It belongs to the metallo-dependent hydrolases superfamily. DHOase family. Class II DHOase subfamily. The cofactor is Zn(2+).

It carries out the reaction (S)-dihydroorotate + H2O = N-carbamoyl-L-aspartate + H(+). Its pathway is pyrimidine metabolism; UMP biosynthesis via de novo pathway; (S)-dihydroorotate from bicarbonate: step 3/3. The sequence is that of Dihydroorotase (PYR3) from Mycosarcoma maydis (Corn smut fungus).